The following is a 141-amino-acid chain: 3-hydroxyacyl-[acyl-carrier-protein] dehydratase FabZ (141 aa).

Residue histidine 49 is part of the active site.

Belongs to the thioester dehydratase family. FabZ subfamily.

The protein localises to the cytoplasm. It catalyses the reaction a (3R)-hydroxyacyl-[ACP] = a (2E)-enoyl-[ACP] + H2O. Functionally, involved in unsaturated fatty acids biosynthesis. Catalyzes the dehydration of short chain beta-hydroxyacyl-ACPs and long chain saturated and unsaturated beta-hydroxyacyl-ACPs. This is 3-hydroxyacyl-[acyl-carrier-protein] dehydratase FabZ (fabZ2) from Enterococcus faecalis (strain ATCC 700802 / V583).